The chain runs to 46 residues: Endochitinase 2 (46 aa).

The protein belongs to the glycosyl hydrolase 19 family. Chitinase class I subfamily.

It carries out the reaction Random endo-hydrolysis of N-acetyl-beta-D-glucosaminide (1-&gt;4)-beta-linkages in chitin and chitodextrins.. Defense against chitin-containing fungal and bacterial pathogens. This is Endochitinase 2 from Arachis hypogaea (Peanut).